Reading from the N-terminus, the 211-residue chain is Thiamine-phosphate synthase (211 aa).

4-amino-2-methyl-5-(diphosphooxymethyl)pyrimidine is bound by residues 37–41 and Asn-69; that span reads QLRIK. Mg(2+) contacts are provided by Asp-70 and Asp-89. A 4-amino-2-methyl-5-(diphosphooxymethyl)pyrimidine-binding site is contributed by Ser-108. 2-[(2R,5Z)-2-carboxy-4-methylthiazol-5(2H)-ylidene]ethyl phosphate is bound at residue 134–136; the sequence is TQT. Lys-137 contributes to the 4-amino-2-methyl-5-(diphosphooxymethyl)pyrimidine binding site. 2-[(2R,5Z)-2-carboxy-4-methylthiazol-5(2H)-ylidene]ethyl phosphate contacts are provided by residues Gly-166 and 186-187; that span reads VS.

It belongs to the thiamine-phosphate synthase family. The cofactor is Mg(2+).

The catalysed reaction is 2-[(2R,5Z)-2-carboxy-4-methylthiazol-5(2H)-ylidene]ethyl phosphate + 4-amino-2-methyl-5-(diphosphooxymethyl)pyrimidine + 2 H(+) = thiamine phosphate + CO2 + diphosphate. It carries out the reaction 2-(2-carboxy-4-methylthiazol-5-yl)ethyl phosphate + 4-amino-2-methyl-5-(diphosphooxymethyl)pyrimidine + 2 H(+) = thiamine phosphate + CO2 + diphosphate. The enzyme catalyses 4-methyl-5-(2-phosphooxyethyl)-thiazole + 4-amino-2-methyl-5-(diphosphooxymethyl)pyrimidine + H(+) = thiamine phosphate + diphosphate. Its pathway is cofactor biosynthesis; thiamine diphosphate biosynthesis; thiamine phosphate from 4-amino-2-methyl-5-diphosphomethylpyrimidine and 4-methyl-5-(2-phosphoethyl)-thiazole: step 1/1. Condenses 4-methyl-5-(beta-hydroxyethyl)thiazole monophosphate (THZ-P) and 2-methyl-4-amino-5-hydroxymethyl pyrimidine pyrophosphate (HMP-PP) to form thiamine monophosphate (TMP). This is Thiamine-phosphate synthase from Salmonella paratyphi B (strain ATCC BAA-1250 / SPB7).